A 643-amino-acid polypeptide reads, in one-letter code: 1-deoxy-D-xylulose-5-phosphate synthase (643 aa).

Residues histidine 72 and 113–115 (GHA) each bind thiamine diphosphate. A Mg(2+)-binding site is contributed by aspartate 144. Residues 145-146 (GA), asparagine 174, tyrosine 287, and glutamate 370 contribute to the thiamine diphosphate site. Asparagine 174 is a Mg(2+) binding site.

The protein belongs to the transketolase family. DXPS subfamily. Homodimer. The cofactor is Mg(2+). It depends on thiamine diphosphate as a cofactor.

It catalyses the reaction D-glyceraldehyde 3-phosphate + pyruvate + H(+) = 1-deoxy-D-xylulose 5-phosphate + CO2. Its pathway is metabolic intermediate biosynthesis; 1-deoxy-D-xylulose 5-phosphate biosynthesis; 1-deoxy-D-xylulose 5-phosphate from D-glyceraldehyde 3-phosphate and pyruvate: step 1/1. In terms of biological role, catalyzes the acyloin condensation reaction between C atoms 2 and 3 of pyruvate and glyceraldehyde 3-phosphate to yield 1-deoxy-D-xylulose-5-phosphate (DXP). The protein is 1-deoxy-D-xylulose-5-phosphate synthase of Prochlorococcus marinus (strain MIT 9211).